We begin with the raw amino-acid sequence, 375 residues long: MSAVLDLTCELIARPSVTPDDAGCQTLLAARLKQAGFQCDHLRLGEVDNLWATHGQGAPVLVLLGHTDVVPPGPREAWASDPFTPQIREGVLYGRGTADMKGSVAAFVVAAEQFVAAHPDHTGTLAVLLTSDEEGDAIDGVRHVARLFAERGQRIDWCITGEPSSTATLGDLLRVGRRGSLSAKLRVQGVQGHVAYPEKARNPIHQAAPALAELSARRWDDGYESFPPTSLQISNIHAGTGANNVIPGELEVDFNIRYNPHWDAPKLEAEITALLDQHGLQYTLKWHRSGEPFYTPEGTLRATARAVLAEHIGRAPEESTGGGTSDARFIAPLGAQCIEVGPVNASIHQVDENVRVDELEALPGLYQRLVERLLV.

His-66 lines the Zn(2+) pocket. Asp-68 is a catalytic residue. Asp-99 serves as a coordination point for Zn(2+). Glu-133 serves as the catalytic Proton acceptor. Residues Glu-134, Glu-162, and His-348 each contribute to the Zn(2+) site.

This sequence belongs to the peptidase M20A family. DapE subfamily. Homodimer. It depends on Zn(2+) as a cofactor. The cofactor is Co(2+).

It carries out the reaction N-succinyl-(2S,6S)-2,6-diaminopimelate + H2O = (2S,6S)-2,6-diaminopimelate + succinate. Its pathway is amino-acid biosynthesis; L-lysine biosynthesis via DAP pathway; LL-2,6-diaminopimelate from (S)-tetrahydrodipicolinate (succinylase route): step 3/3. Its function is as follows. Catalyzes the hydrolysis of N-succinyl-L,L-diaminopimelic acid (SDAP), forming succinate and LL-2,6-diaminopimelate (DAP), an intermediate involved in the bacterial biosynthesis of lysine and meso-diaminopimelic acid, an essential component of bacterial cell walls. The chain is Succinyl-diaminopimelate desuccinylase from Stenotrophomonas maltophilia (strain R551-3).